The chain runs to 155 residues: MFTIDFSDHTGLVKDAWYKQIEDLLEFAKKEEHIEDDAELSVTFVDKQEIQEINRTYRDKDKVTDVISFALEEDEPDIDFSGLDIPRVLGDIIICTDVAQEQANNYGHSFERELGFLALHGFLHLLGYDHMTEADEKEMFGRQDTILNAYGLTRD.

Zn(2+)-binding residues include H120, H124, and H130.

It belongs to the endoribonuclease YbeY family. It depends on Zn(2+) as a cofactor.

It is found in the cytoplasm. Its function is as follows. Single strand-specific metallo-endoribonuclease involved in late-stage 70S ribosome quality control and in maturation of the 3' terminus of the 16S rRNA. This is Endoribonuclease YbeY from Staphylococcus aureus (strain bovine RF122 / ET3-1).